We begin with the raw amino-acid sequence, 323 residues long: 4-hydroxythreonine-4-phosphate dehydrogenase (323 aa).

Thr133 is a substrate binding site. The a divalent metal cation site is built by His161, His206, and His261. Positions 269, 278, and 287 each coordinate substrate.

It belongs to the PdxA family. Homodimer. Requires Zn(2+) as cofactor. It depends on Mg(2+) as a cofactor. Co(2+) serves as cofactor.

The protein localises to the cytoplasm. It carries out the reaction 4-(phosphooxy)-L-threonine + NAD(+) = 3-amino-2-oxopropyl phosphate + CO2 + NADH. Its pathway is cofactor biosynthesis; pyridoxine 5'-phosphate biosynthesis; pyridoxine 5'-phosphate from D-erythrose 4-phosphate: step 4/5. In terms of biological role, catalyzes the NAD(P)-dependent oxidation of 4-(phosphooxy)-L-threonine (HTP) into 2-amino-3-oxo-4-(phosphooxy)butyric acid which spontaneously decarboxylates to form 3-amino-2-oxopropyl phosphate (AHAP). This chain is 4-hydroxythreonine-4-phosphate dehydrogenase, found in Xanthomonas axonopodis pv. citri (strain 306).